Here is a 422-residue protein sequence, read N- to C-terminus: Retinoic acid receptor RXR-beta-B (422 aa).

The modulating stretch occupies residues 1–89; it reads MNSLPPSTSA…SGPMLSQKRM (89 aa). 2 NR C4-type zinc fingers span residues 90-110 and 126-150; these read CAIC…CEGC and CRDN…YQKC. A DNA-binding region (nuclear receptor) is located at residues 90–155; the sequence is CAICGDRSSG…RYQKCLAMGM (66 aa). The segment at 156–178 is hinge; the sequence is KREAVQEERQKNKERDGDYECSS. Over residues 161-173 the composition is skewed to basic and acidic residues; sequence QEERQKNKERDGD. The tract at residues 161 to 182 is disordered; that stretch reads QEERQKNKERDGDYECSSSANE. In terms of domain architecture, NR LBD spans 181 to 421; it reads NEEMPVEKIL…TFLMEMLESP (241 aa).

The protein belongs to the nuclear hormone receptor family. NR2 subfamily. In terms of assembly, homodimer. Heterodimer; with a rar molecule. Binds DNA preferentially as a rar/rxr heterodimer. Heterodimerizes with rarga. As to expression, shows uniform expression from the blastula to mid-gastrula stages. At 12 hours post-fertilization (hpf), expressed ubiquitously but more weakly. At 24 hpf, restricted to the ventral diencephalon, pharangeal endoderm and trunk and tail mesoderm; mesoderm expression is in medial cells of each somite along the dorsoventral axis, forming stripes. At 48 hpf, expressed in forebrain, eye, midbrain and anterior hindbrain.

It localises to the nucleus. In terms of biological role, receptor for retinoic acid. Retinoic acid receptors bind as heterodimers to their target response elements in response to their ligands, all-trans or 9-cis retinoic acid, and regulate gene expression in various biological processes. The rar/rxr heterodimers bind to the retinoic acid response elements (RARE) composed of tandem 5'-AGGTCA-3' sites known as DR1-DR5. The high affinity ligand for rxrs is 9-cis retinoic acid. This is Retinoic acid receptor RXR-beta-B (rxrbb) from Danio rerio (Zebrafish).